The sequence spans 392 residues: Phosphoglycerate kinase (392 aa).

Residues 21-23 (DLN), R36, 59-62 (HLGR), R114, and R147 contribute to the substrate site. Residues K198, E320, and 346–349 (GGDT) contribute to the ATP site.

It belongs to the phosphoglycerate kinase family. In terms of assembly, monomer.

It localises to the cytoplasm. The catalysed reaction is (2R)-3-phosphoglycerate + ATP = (2R)-3-phospho-glyceroyl phosphate + ADP. It functions in the pathway carbohydrate degradation; glycolysis; pyruvate from D-glyceraldehyde 3-phosphate: step 2/5. In Nitrosomonas eutropha (strain DSM 101675 / C91 / Nm57), this protein is Phosphoglycerate kinase.